The primary structure comprises 236 residues: Cell division protein FtsQ (236 aa).

The Cytoplasmic portion of the chain corresponds to 1-14 (MWDNHQALNQVADW). A helical transmembrane segment spans residues 15–37 (LFTLAGLTTIYLMVQWTIHLPLL). Residues 37–111 (LPLKEVHIRS…NGLDVVVEEH (75 aa)) enclose the POTRA domain. Residues 38-236 (PLKEVHIRSN…VSGFAARGTR (199 aa)) are Periplasmic-facing.

This sequence belongs to the FtsQ/DivIB family. FtsQ subfamily. In terms of assembly, part of a complex composed of FtsB, FtsL and FtsQ.

Its subcellular location is the cell inner membrane. In terms of biological role, essential cell division protein. May link together the upstream cell division proteins, which are predominantly cytoplasmic, with the downstream cell division proteins, which are predominantly periplasmic. May control correct divisome assembly. The chain is Cell division protein FtsQ from Nitrosospira multiformis (strain ATCC 25196 / NCIMB 11849 / C 71).